The sequence spans 352 residues: Adenosine deaminase (352 aa).

Alanine 2 bears the N-acetylalanine mark. Zn(2+) is bound by residues histidine 15 and histidine 17. Positions 17 and 19 each coordinate substrate. Lysine 54 bears the N6-acetyllysine mark. Glycine 184 is a binding site for substrate. Histidine 214 contributes to the Zn(2+) binding site. Glutamate 217 acts as the Proton donor in catalysis. Position 232 is an N6-acetyllysine (lysine 232). Aspartate 295 provides a ligand contact to Zn(2+). Aspartate 296 lines the substrate pocket.

This sequence belongs to the metallo-dependent hydrolases superfamily. Adenosine and AMP deaminases family. In terms of assembly, interacts with DPP4 (via extracellular domain). Interacts with PLG (via Kringle 4 domain); the interaction stimulates PLG activation when in complex with DPP4. It depends on Zn(2+) as a cofactor. Detected in brain neurons in the median emninence (at protein level). Expressed in secondary deciduum (at protein level). Found in all tissues, occurs in large amounts in T-lymphocytes and, at the time of weaning, in gastrointestinal tissues.

It is found in the cell membrane. The protein resides in the cell junction. It localises to the cytoplasmic vesicle lumen. Its subcellular location is the cytoplasm. The protein localises to the lysosome. The enzyme catalyses adenosine + H2O + H(+) = inosine + NH4(+). It carries out the reaction 2'-deoxyadenosine + H2O + H(+) = 2'-deoxyinosine + NH4(+). The catalysed reaction is cordycepin + H2O + H(+) = 3'-deoxyinosine + NH4(+). Its function is as follows. Catalyzes the hydrolytic deamination of adenosine and 2-deoxyadenosine. Plays an important role in purine metabolism and in adenosine homeostasis. Modulates signaling by extracellular adenosine, and so contributes indirectly to cellular signaling events. Acts as a positive regulator of T-cell coactivation, by binding DPP4. Its interaction with DPP4 regulates lymphocyte-epithelial cell adhesion. Enhances dendritic cell immunogenicity by affecting dendritic cell costimulatory molecule expression and cytokines and chemokines secretion. Enhances CD4+ T-cell differentiation and proliferation. Acts as a positive modulator of adenosine receptors ADORA1 and ADORA2A, by enhancing their ligand affinity via conformational change. Stimulates plasminogen activation. Plays a role in male fertility. Plays a protective role in early postimplantation embryonic development. Also responsible for the deamination of cordycepin (3'-deoxyadenosine), a fungal natural product that shows antitumor, antibacterial, antifungal, antivirus, and immune regulation properties. This chain is Adenosine deaminase (Ada), found in Mus musculus (Mouse).